We begin with the raw amino-acid sequence, 94 residues long: Small ribosomal subunit protein bS6 (94 aa).

The protein belongs to the bacterial ribosomal protein bS6 family.

Binds together with bS18 to 16S ribosomal RNA. The sequence is that of Small ribosomal subunit protein bS6 from Clostridium botulinum (strain Hall / ATCC 3502 / NCTC 13319 / Type A).